The following is a 299-amino-acid chain: Nucleotide-binding protein RER_30260 (299 aa).

19 to 26 (GLSGAGLS) serves as a coordination point for ATP. A GTP-binding site is contributed by 70–73 (DVRS).

This sequence belongs to the RapZ-like family.

Functionally, displays ATPase and GTPase activities. The chain is Nucleotide-binding protein RER_30260 from Rhodococcus erythropolis (strain PR4 / NBRC 100887).